A 726-amino-acid chain; its full sequence is Probable cyclic nucleotide-gated ion channel 14 (726 aa).

The Cytoplasmic portion of the chain corresponds to 1–86; it reads MEFKRDNTVR…GDAVLQWNRV (86 aa). A helical transmembrane segment spans residues 87 to 107; sequence FLFWCLVALYVDPLFFFLSSV. The Extracellular segment spans residues 108 to 122; sequence KRIGRSSCMTTDLKL. The chain crosses the membrane as a helical span at residues 123–143; the sequence is GIVITFFRTLADLFYVLHIVI. The Cytoplasmic segment spans residues 144–177; that stretch reads KFRTAYVSRTSRVFGRGELVKDPKLIARRYLRSD. The chain crosses the membrane as a helical span at residues 178 to 198; sequence FIVDLIACLPLPQIVSWFILP. The Extracellular portion of the chain corresponds to 199 to 211; that stretch reads SIRSSHSDHTTNA. Residues 212-232 form a helical membrane-spanning segment; sequence LVLIVLVQYIPRLYLIFPLSA. Topologically, residues 233–252 are cytoplasmic; that stretch reads EIIKATGVVTTTAWAGAAYN. A helical transmembrane segment spans residues 253 to 273; it reads LLQYMLASHILGSAWYLLSIE. The Extracellular segment spans residues 274–377; sequence RQATCWKAEC…LSTSTSVLET (104 aa). Residues 378-398 form a helical membrane-spanning segment; the sequence is MFAILVAIFGLVLFALLIGNM. The Cytoplasmic portion of the chain corresponds to 399–726; the sequence is QTYLQSITVR…PDEPDFSVDD (328 aa). Residues 481 to 605 and E552 each bind a nucleoside 3',5'-cyclic phosphate; that span reads LFAQ…SKKL. Positions 597-612 are calmodulin-binding; the sequence is FRRLHSKKLQHTFRYY. One can recognise an IQ domain in the interval 617–646; it reads RTWAACFVQVAWRRYKRKKLAKSLSLAESF. The tract at residues 707-726 is disordered; sequence KDVEIPMLPKPDEPDFSVDD.

It belongs to the cyclic nucleotide-gated cation channel (TC 1.A.1.5) family. Homotetramer or heterotetramer.

It is found in the cell membrane. In terms of biological role, probable cyclic nucleotide-gated ion channel. In Arabidopsis thaliana (Mouse-ear cress), this protein is Probable cyclic nucleotide-gated ion channel 14 (CNGC14).